A 355-amino-acid polypeptide reads, in one-letter code: Sesquiterpene synthase-like protein Agr11 (355 aa).

This sequence belongs to the terpene synthase family.

The protein is Sesquiterpene synthase-like protein Agr11 of Cyclocybe aegerita (Black poplar mushroom).